Consider the following 479-residue polypeptide: UDP-N-acetylmuramate--L-alanine ligase (479 aa).

114 to 120 (GTHGKTT) provides a ligand contact to ATP.

Belongs to the MurCDEF family.

The protein resides in the cytoplasm. It carries out the reaction UDP-N-acetyl-alpha-D-muramate + L-alanine + ATP = UDP-N-acetyl-alpha-D-muramoyl-L-alanine + ADP + phosphate + H(+). Its pathway is cell wall biogenesis; peptidoglycan biosynthesis. In terms of biological role, cell wall formation. The polypeptide is UDP-N-acetylmuramate--L-alanine ligase (Pelodictyon phaeoclathratiforme (strain DSM 5477 / BU-1)).